A 548-amino-acid polypeptide reads, in one-letter code: Chaperonin GroEL (548 aa).

Residues 29–32 (TLGP), K50, 86–90 (DGTTT), G413, 479–481 (NAA), and D496 contribute to the ATP site.

This sequence belongs to the chaperonin (HSP60) family. In terms of assembly, forms a cylinder of 14 subunits composed of two heptameric rings stacked back-to-back. Interacts with the co-chaperonin GroES.

It localises to the cytoplasm. The enzyme catalyses ATP + H2O + a folded polypeptide = ADP + phosphate + an unfolded polypeptide.. Its function is as follows. Together with its co-chaperonin GroES, plays an essential role in assisting protein folding. The GroEL-GroES system forms a nano-cage that allows encapsulation of the non-native substrate proteins and provides a physical environment optimized to promote and accelerate protein folding. This is Chaperonin GroEL from Deinococcus radiodurans (strain ATCC 13939 / DSM 20539 / JCM 16871 / CCUG 27074 / LMG 4051 / NBRC 15346 / NCIMB 9279 / VKM B-1422 / R1).